Here is a 170-residue protein sequence, read N- to C-terminus: ATP synthase subunit b (170 aa).

The chain crosses the membrane as a helical span at residues 15–37 (GDILFQLLAMLILLALLKKYALG).

The protein belongs to the ATPase B chain family. F-type ATPases have 2 components, F(1) - the catalytic core - and F(0) - the membrane proton channel. F(1) has five subunits: alpha(3), beta(3), gamma(1), delta(1), epsilon(1). F(0) has three main subunits: a(1), b(2) and c(10-14). The alpha and beta chains form an alternating ring which encloses part of the gamma chain. F(1) is attached to F(0) by a central stalk formed by the gamma and epsilon chains, while a peripheral stalk is formed by the delta and b chains. The F(1)F(0) complex interacts with SpoIIIJ and YqjG; YqgA is found in the same complex.

It is found in the cell membrane. In terms of biological role, f(1)F(0) ATP synthase produces ATP from ADP in the presence of a proton or sodium gradient. F-type ATPases consist of two structural domains, F(1) containing the extramembraneous catalytic core and F(0) containing the membrane proton channel, linked together by a central stalk and a peripheral stalk. During catalysis, ATP synthesis in the catalytic domain of F(1) is coupled via a rotary mechanism of the central stalk subunits to proton translocation. Its function is as follows. Component of the F(0) channel, it forms part of the peripheral stalk, linking F(1) to F(0). The sequence is that of ATP synthase subunit b from Bacillus subtilis (strain 168).